A 400-amino-acid polypeptide reads, in one-letter code: Nicotinate phosphoribosyltransferase (400 aa).

At His220 the chain carries Phosphohistidine; by autocatalysis.

The protein belongs to the NAPRTase family. In terms of processing, transiently phosphorylated on a His residue during the reaction cycle. Phosphorylation strongly increases the affinity for substrates and increases the rate of nicotinate D-ribonucleotide production. Dephosphorylation regenerates the low-affinity form of the enzyme, leading to product release.

The enzyme catalyses nicotinate + 5-phospho-alpha-D-ribose 1-diphosphate + ATP + H2O = nicotinate beta-D-ribonucleotide + ADP + phosphate + diphosphate. It functions in the pathway cofactor biosynthesis; NAD(+) biosynthesis; nicotinate D-ribonucleotide from nicotinate: step 1/1. Catalyzes the synthesis of beta-nicotinate D-ribonucleotide from nicotinate and 5-phospho-D-ribose 1-phosphate at the expense of ATP. This Salmonella dublin (strain CT_02021853) protein is Nicotinate phosphoribosyltransferase.